A 224-amino-acid polypeptide reads, in one-letter code: Serum amyloid P-component (224 aa).

The signal sequence occupies residues 1-19; it reads MNKLMSWVSVLIILPEAFA. The region spanning 24 to 224 is the Pentraxin (PTX) domain; that stretch reads RGKVFVFPRE…YVIVKPMVWG (201 aa). Residue Asn51 is glycosylated (N-linked (GlcNAc...) asparagine). Cys55 and Cys114 are joined by a disulfide. Positions 77, 78, 155, 156, and 157 each coordinate Ca(2+). Residue Asn166 is glycosylated (N-linked (GlcNAc...) asparagine). Ca(2+) is bound at residue Gln167.

This sequence belongs to the pentraxin family. As to quaternary structure, homopentamer. Pentraxin (or pentaxin) have a discoid arrangement of 5 non-covalently bound subunits. It depends on Ca(2+) as a cofactor.

It localises to the secreted. The chain is Serum amyloid P-component (APCS) from Bos taurus (Bovine).